The following is a 376-amino-acid chain: RCC1 domain-containing protein 1 (376 aa).

An interaction with KDM8 region spans residues 1 to 169 (MAEERPGAWF…ARQLELGAEH (169 aa)). The stretch at 6-56 (PGAWFGFGFCGFGQELGSGRGRQVHSPSPLRAGVDICRVSASWSYTAFVTR) is one RCC1 1 repeat. Position 141 is a (3R)-3-hydroxyarginine (arginine 141). RCC1 repeat units lie at residues 176–227 (AGQV…CVSE), 229–317 (GDIY…VVTR), and 318–371 (TGEL…VYAV).

Found in a complex with KDM8. Interacts (via N-terminus) with KDM8 (via N-terminus). Specifically hydroxylated (with R stereochemistry) at C-3 of ARG-141 by KDM8.

The protein resides in the chromosome. In terms of biological role, plays a role in transcriptional repression of satellite repeats, possibly by regulating H3K36 methylation levels in centromeric regions together with KDM8. Possibly together with KDM8, is involved in proper mitotic spindle organization and chromosome segregation. Plays a role in regulating alpha-tubulin deacetylation and cytoskeletal microtubule stability, thereby promoting cell migration and TGF-beta-induced epithelial to mesenchymal transition (EMT), potentially through the inhibition of KDM8. This chain is RCC1 domain-containing protein 1, found in Homo sapiens (Human).